A 146-amino-acid chain; its full sequence is Hemoglobin subunit beta (146 aa).

N-acetylvaline is present on V1. A Globin domain is found at 2-146; the sequence is HLTDAEKAAI…VATALGHKYH (145 aa). The residue at position 59 (K59) is an N6-acetyllysine. A heme b-binding site is contributed by H63. K82 carries the N6-acetyllysine modification. Residue H92 coordinates heme b. C93 bears the S-nitrosocysteine mark. N6-acetyllysine is present on K144.

This sequence belongs to the globin family. Heterotetramer of two alpha chains and two beta chains. In terms of tissue distribution, red blood cells.

Involved in oxygen transport from the lung to the various peripheral tissues. The chain is Hemoglobin subunit beta (HBB) from Ondatra zibethicus (Muskrat).